The primary structure comprises 1481 residues: MLHINMHIIDIGINTKMKPTPRHIHMIVKSNYTNMELERNTFSSNMNVMKDELNEMRRKLELHEAEKRAEITKGSQKKSNSSSSENLEKDNAIKSLRSQLNSVKVVNEQLKFNIRELQNSHSITIKKLEQIHRDNLTSVEISFANNIEKYKSRIDELTRVNGELTKINATLSVAGPSASPLRKSGDDQRSYNRYTTNDINKLNRDRNQWLRELNIIRSENGELKRQIDSLNKLLEKSRNEIKQIRSKYNSLETQKDYENGDLFAGMEENLDAAVSRCKELFDEKLRLENDIQRLMEEGAMNRDKIHRQNYDIEKLKNTIQENLDKQFDLINNGYRYDDDDDDNCSGGVAVLKSRITNLESQIIELSADIEYRDGNIASLEKERDDLKQKYNNEKRNSRNASDGVAKLKINMKKSELERDKFREKCLKSDNIIMELKRQLEINNVDLERIRDERNEYQEKVKFLDAEILTNRNKFEEQTNALNNMLRQYSRRSINNSNPSLNDTRKLHMQLQLQIETLNNQLDTVKSERKIVLEEVIRLNHQIDTLKQIYQCSMQNTTILCRNYVKNSDSKLEYLLNSHRDELKEYQDMLNISEAKLIQSEKQYQQLMADNSSAATEMRALEKRLASEMNRYQEELSQKDAIISQLKSVIEPMQREIENLNTSRRNLQYNINNTTNDSELTTSSSSSNNMLLYDKIKQLENELNRYKESERAWRNERDLLVSKMRNTVGANDLSLQSRIRTLEMDNKNLRENLQANNSTIANERANYIQQLDKLNEEIDMNNREMGKLQVEIASLNNQLNASNVLNESQIEKINRQNEELNSNLTEINALRDELNKRESDILVANRELNVLRRRVEKYKSSTTPSSEEKLTTPKRMQYVKTIKTLRKEIADNKRQIKNLIRDRSQNDDHINQLRVNDQLLNVINSLKNQIRESNGEIKMYERKLYESNRQNVKLNDNMKRVVGENESLNNRIKSIYNNYDKQIAEIGEEVAKKNELIKILTLSVENIESNNEDVRGDGVNTTNFFKNLLVTTIRERNDLDRKVQELQSEVFINKSRLSECQATMVQLNNDLTMRVEENKNLERVIVELRERISNNESKLQELQLEDGGRMTRIPEYDDENIRNYRLRLQQAQNIIKNNQNELSRLKNVDNDLRELRKKLLSQSGKEDNDNHISQELQNAMTQLDYSKNIIEEHVEQIQQLTAKNEDTERALNELQGDMRALEVDRSNILTENASLNDELTSMKDDIDIMQRKFTQLQNDYYSTSRELELEKEERFKCNATNVEIKQELRTLKSELLRLQKQCGGIKKCATKLQESIISGDEKLSSTVSSSSSSSPKTTTKRKRNNDDNTNDDYNNRKKVHLSKSTSRSPKRNLKRKEINNDNDASTSKNRRSSSSRTTITPPIPRSRALRLSASSIEDLKIDSKRQRLLNAGIVQDTELTDEEYDENFDRNLLSDDDTEEDIMRKRILSNPKYEFLNNTYNG.

Disordered regions lie at residues Ala-65–Glu-88 and Asp-1319–Pro-1403. Composition is skewed to low complexity over residues Lys-73–Ser-84, Ser-1323–Thr-1336, and Ser-1393–Pro-1403.

It localises to the virion. The protein is Structural protein ORF147 of Noctuidae (owlet moths).